Consider the following 240-residue polypeptide: Orotidine 5'-phosphate decarboxylase (240 aa).

Substrate contacts are provided by residues Asp-10, Lys-32, 59 to 68 (DLKLHDIPNT), Thr-122, Arg-183, Gln-192, Gly-212, and Arg-213. Catalysis depends on Lys-61, which acts as the Proton donor.

This sequence belongs to the OMP decarboxylase family. Type 1 subfamily. In terms of assembly, homodimer.

It catalyses the reaction orotidine 5'-phosphate + H(+) = UMP + CO2. Its pathway is pyrimidine metabolism; UMP biosynthesis via de novo pathway; UMP from orotate: step 2/2. Its function is as follows. Catalyzes the decarboxylation of orotidine 5'-monophosphate (OMP) to uridine 5'-monophosphate (UMP). The polypeptide is Orotidine 5'-phosphate decarboxylase (Carboxydothermus hydrogenoformans (strain ATCC BAA-161 / DSM 6008 / Z-2901)).